The sequence spans 689 residues: Centrosomal protein of 78 kDa (689 aa).

2 positions are modified to phosphoserine: Ser325 and Ser327. Disordered stretches follow at residues 432–451, 563–589, and 614–689; these read SSEV…VPEK, PQMT…EPKQ, and DSFP…TESH. The stretch at 450 to 505 forms a coiled coil; that stretch reads EKTSIEQEALQEKLEECLKQLKEERVIRLKVDKRVSELEHENAQLRNINFSLSEAL. 2 stretches are compositionally biased toward basic and acidic residues: residues 573–587 and 666–689; these read PKEE…KPEP and QRKE…TESH.

It belongs to the CEP78 family. In terms of assembly, interacts with PLK4. Interacts with FAM161A. Interacts with IFT20; regulating IFT20 stability and localization. Interacts with TTC21A; regulating TTC21A stability and localization. Interacts with USP16; promoting USP16-dependent deubiquitination of tektins. Interacts with DCAF1/VPRBP; promoting localization of the EDVP complex to centrosomes. Interacts with CEP350; promoting CEP78 localization to centrosome and centriole. Widely expressed. Expressed in different retinal cell types with higher expression in cone compared to rod cells (at protein level).

The protein localises to the cytoplasm. It is found in the cytoskeleton. It localises to the microtubule organizing center. The protein resides in the centrosome. Its subcellular location is the centriole. The protein localises to the cilium basal body. Its function is as follows. Centriole wall protein that localizes to mature centrioles and regulates centriole and cilia biogenesis. Involved in centrosome duplication: required for efficient PLK4 centrosomal localization and PLK4-induced overduplication of centrioles. Involved in cilium biogenesis and controls cilium length. Acts as a regulator of protein stability by preventing ubiquitination of centrosomal proteins, such as CCP110 and tektins. Associates with the EDVP complex, preventing ubiquitination and degradation of CCP110. Promotes deubiquitination of tektin proteins (TEKT1, TEKT2, TEK3, TEKT4 and TEKT5) via its interaction with USP16. The protein is Centrosomal protein of 78 kDa of Homo sapiens (Human).